A 297-amino-acid chain; its full sequence is Molybdate/tungstate import ATP-binding protein WtpC (297 aa).

Residues 2–226 form the ABC transporter domain; sequence LKVNNLSKIW…PKNKKVAEFL (225 aa). 32–39 lines the ATP pocket; it reads GPSGAGKS.

The protein belongs to the ABC transporter superfamily. Sulfate/tungstate importer (TC 3.A.1.6) family. In terms of assembly, the complex is composed of two ATP-binding proteins (WtpC), two transmembrane proteins (WtpB) and a solute-binding protein (WtpA).

It is found in the cell membrane. The catalysed reaction is tungstate(in) + ATP + H2O = tungstate(out) + ADP + phosphate + H(+). Its function is as follows. Part of the ABC transporter complex WtpABC involved in molybdate/tungstate import. Responsible for energy coupling to the transport system. This is Molybdate/tungstate import ATP-binding protein WtpC (wtpC) from Methanocaldococcus jannaschii (strain ATCC 43067 / DSM 2661 / JAL-1 / JCM 10045 / NBRC 100440) (Methanococcus jannaschii).